Here is a 170-residue protein sequence, read N- to C-terminus: Small ribosomal subunit protein uS5 (170 aa).

The S5 DRBM domain maps to 13–76 (LLEKLVGVRR…ENARKNMISV (64 aa)).

The protein belongs to the universal ribosomal protein uS5 family. In terms of assembly, part of the 30S ribosomal subunit. Contacts proteins S4 and S8.

Its function is as follows. With S4 and S12 plays an important role in translational accuracy. In terms of biological role, located at the back of the 30S subunit body where it stabilizes the conformation of the head with respect to the body. The sequence is that of Small ribosomal subunit protein uS5 from Nitrosococcus oceani (strain ATCC 19707 / BCRC 17464 / JCM 30415 / NCIMB 11848 / C-107).